The following is a 305-amino-acid chain: Ornithine carbamoyltransferase, catabolic (305 aa).

Residues 50-53 (STRT), Q77, R101, and 128-131 (HPLQ) each bind carbamoyl phosphate. L-ornithine contacts are provided by residues N159, D223, and 227-228 (SM). Carbamoyl phosphate is bound by residues 263–264 (CL) and R291.

The protein belongs to the aspartate/ornithine carbamoyltransferase superfamily. OTCase family.

It is found in the cytoplasm. The catalysed reaction is carbamoyl phosphate + L-ornithine = L-citrulline + phosphate + H(+). It functions in the pathway amino-acid degradation; L-arginine degradation via ADI pathway; carbamoyl phosphate from L-arginine: step 2/2. Its function is as follows. Reversibly catalyzes the transfer of the carbamoyl group from carbamoyl phosphate (CP) to the N(epsilon) atom of ornithine (ORN) to produce L-citrulline. The chain is Ornithine carbamoyltransferase, catabolic from Thermoplasma acidophilum (strain ATCC 25905 / DSM 1728 / JCM 9062 / NBRC 15155 / AMRC-C165).